The sequence spans 313 residues: Methionyl-tRNA formyltransferase (313 aa).

Residues 32–51 (QPDRRKGRGKELQPPPAKRK) are disordered. Position 109–112 (109–112 (SLLP)) interacts with (6S)-5,6,7,8-tetrahydrofolate.

The protein belongs to the Fmt family.

It carries out the reaction L-methionyl-tRNA(fMet) + (6R)-10-formyltetrahydrofolate = N-formyl-L-methionyl-tRNA(fMet) + (6S)-5,6,7,8-tetrahydrofolate + H(+). Attaches a formyl group to the free amino group of methionyl-tRNA(fMet). The formyl group appears to play a dual role in the initiator identity of N-formylmethionyl-tRNA by promoting its recognition by IF2 and preventing the misappropriation of this tRNA by the elongation apparatus. In Natranaerobius thermophilus (strain ATCC BAA-1301 / DSM 18059 / JW/NM-WN-LF), this protein is Methionyl-tRNA formyltransferase.